A 476-amino-acid chain; its full sequence is Cyclase-associated protein 1 (476 aa).

Disordered regions lie at residues 224–262 and 277–319; these read KPAS…KQGM and GLRK…PPKM. Over residues 231-243 the composition is skewed to pro residues; the sequence is KGPPGAPAPPPAP. Residues 246–256 show a composition bias toward low complexity; it reads SAESSKPSSSS. The span at 280–293 shows a compositional bias: basic and acidic residues; sequence KVTDDMKTKNRADR. One can recognise a C-CAP/cofactor C-like domain in the interval 316–453; it reads PPKMELQMGR…PDGDWVEHAL (138 aa).

It belongs to the CAP family. Expressed in roots, cotyledons, leaves, stems, flowers, pollen and shoots. Not detected in siliques.

Its function is as follows. Actin monomer binding protein that accelerates the exchange of ADP for ATP. Regulates the pool of unpolymerized ATP-actin. Key intermediate between actin-depolymerizing factor (ADF)-mediated disassembly and the profilin-based nucleation and elongation machinery. The chain is Cyclase-associated protein 1 (CAP1) from Arabidopsis thaliana (Mouse-ear cress).